Here is a 147-residue protein sequence, read N- to C-terminus: UPF0306 protein YhbP (147 aa).

It belongs to the UPF0306 family.

This Salmonella schwarzengrund (strain CVM19633) protein is UPF0306 protein YhbP.